Consider the following 202-residue polypeptide: Transmembrane 4 L6 family member 1 (202 aa).

The Cytoplasmic segment spans residues 1-9; it reads MCYGKCARC. A helical membrane pass occupies residues 10–30; the sequence is IGHSLVGLALLCIAANILLYF. Residues 31-49 lie on the Extracellular side of the membrane; the sequence is PNGETKYASENHLSRFVWF. Residues 50–70 traverse the membrane as a helical segment; that stretch reads FSGIVGGGLLMLLPAFVFIGL. The Cytoplasmic portion of the chain corresponds to 71 to 93; sequence EQDDCCGCCGHENCGKRCAMLSS. Residues 94–114 form a helical membrane-spanning segment; the sequence is VLAALIGIAGSGYCVIVAALG. At 115–161 the chain is on the extracellular side; the sequence is LAEGPLCLDSLGQWNYTFASTEGQYLLDTSTWSECTEPKHIVEWNVS. Asparagine 129 and asparagine 159 each carry an N-linked (GlcNAc...) asparagine glycan. Residues 162 to 182 form a helical membrane-spanning segment; it reads LFSILLALGGIEFILCLIQVI. Residues 183 to 202 lie on the Cytoplasmic side of the membrane; the sequence is NGVLGGICGFCCSHQQQYDC.

This sequence belongs to the L6 tetraspanin family. Present in high molecular weight complexes in tumor cells. Interacts with SDCBP2. As to expression, highly expressed in lung, breast, colon and ovarian carcinomas. It is also present on some normal cells, endothelial cells in particular.

Its subcellular location is the membrane. The polypeptide is Transmembrane 4 L6 family member 1 (TM4SF1) (Homo sapiens (Human)).